The sequence spans 328 residues: Nickel import system permease protein NikB (328 aa).

6 consecutive transmembrane segments (helical) span residues 11–31 (LMQMIVVLFVISTLTFILMKL), 104–124 (LLISFSTLVVSLCISIPLGII), 139–159 (VISTLSISLPAFFIGIILLFI), 170–190 (ILSQFILPVITLSLGMCAYII), 229–249 (ILPIIPLLGISLGSLIGGTVV), and 279–299 (VLFIGFFVVIINTIADLLTLL). An ABC transmembrane type-1 domain is found at 100 to 297 (APITLLISFS…IINTIADLLT (198 aa)).

This sequence belongs to the binding-protein-dependent transport system permease family. OppBC subfamily. In terms of assembly, the complex is composed of two ATP-binding proteins (NikD and NikE), two transmembrane proteins (NikB and NikC) and a solute-binding protein (NikA).

It localises to the cell membrane. Part of the ABC transporter complex NikABCDE (Opp2) involved in nickel import. Probably responsible for the translocation of the substrate across the membrane. The protein is Nickel import system permease protein NikB of Staphylococcus aureus (strain MSSA476).